A 402-amino-acid chain; its full sequence is Lipid-A-disaccharide synthase (402 aa).

It belongs to the LpxB family.

The enzyme catalyses a lipid X + a UDP-2-N,3-O-bis[(3R)-3-hydroxyacyl]-alpha-D-glucosamine = a lipid A disaccharide + UDP + H(+). The protein operates within bacterial outer membrane biogenesis; LPS lipid A biosynthesis. Functionally, condensation of UDP-2,3-diacylglucosamine and 2,3-diacylglucosamine-1-phosphate to form lipid A disaccharide, a precursor of lipid A, a phosphorylated glycolipid that anchors the lipopolysaccharide to the outer membrane of the cell. The protein is Lipid-A-disaccharide synthase of Cupriavidus pinatubonensis (strain JMP 134 / LMG 1197) (Cupriavidus necator (strain JMP 134)).